The sequence spans 294 residues: Nucleophosmin (294 aa).

Position 1 is an N-acetylmethionine (Met1). The necessary for interaction with APEX1 stretch occupies residues 1 to 117 (MEDSMDMDMS…PVHISGQHLV (117 aa)). The interval 1-186 (MEDSMDMDMS…DDDDFDDEEA (186 aa)) is required for interaction with SENP3. Phosphoserine; by PLK1 and PLK2 is present on Ser4. The residue at position 10 (Ser10) is a Phosphoserine. Lys27 participates in a covalent cross-link: Glycyl lysine isopeptide (Lys-Gly) (interchain with G-Cter in SUMO2). Lys32 bears the N6-acetyllysine; alternate mark. A Glycyl lysine isopeptide (Lys-Gly) (interchain with G-Cter in SUMO1); alternate cross-link involves residue Lys32. Residue Lys32 forms a Glycyl lysine isopeptide (Lys-Gly) (interchain with G-Cter in SUMO2); alternate linkage. A Phosphoserine modification is found at Ser43. At Tyr67 the chain carries Phosphotyrosine. Ser70 is subject to Phosphoserine. A phosphothreonine mark is found at Thr75 and Thr95. The span at 120 to 132 (EEDAESEDEEEED) shows a compositional bias: acidic residues. Residues 120 to 247 (EEDAESEDEE…PKGPSSVEDI (128 aa)) form a disordered region. Phosphoserine; by CDK2 is present on Ser125. 2 positions are modified to phosphoserine: Ser137 and Ser139. Lys141 is covalently cross-linked (Glycyl lysine isopeptide (Lys-Gly) (interchain with G-Cter in SUMO2)). Lys150 carries the N6-acetyllysine; alternate modification. Lys150 is covalently cross-linked (Glycyl lysine isopeptide (Lys-Gly) (interchain with G-Cter in SUMO2); alternate). The Nuclear localization signal signature appears at 152 to 157 (PQKKVK). N6-acetyllysine is present on Lys154. Positions 161 to 187 (DEDDDDDDEEDDDEDDDDDDFDDEEAE) are enriched in acidic residues. Residues 187-215 (EEKAPVKKSIRDTPAKNAQKSNQNGKDSK) form an interaction with NOP2 region. The span at 188-200 (EKAPVKKSIRDTP) shows a compositional bias: basic and acidic residues. The Nuclear localization signal motif lies at 191-197 (PVKKSIR). Position 199 is a phosphothreonine; by CDK1, CDK2 and CDK6 (Thr199). The span at 202–222 (KNAQKSNQNGKDSKPSSTPRS) shows a compositional bias: polar residues. Ser207 is modified (ADP-ribosylserine). Lys212 carries the post-translational modification N6-acetyllysine. Residue Lys215 forms a Glycyl lysine isopeptide (Lys-Gly) (interchain with G-Cter in SUMO2) linkage. Thr219 carries the post-translational modification Phosphothreonine; by CDK1. The segment covering 223 to 235 (KGQESFKKQEKTP) has biased composition (basic and acidic residues). Residue Ser227 is modified to Phosphoserine. Residue Lys229 is modified to N6-acetyllysine. Lys230 carries the N6-acetyllysine; alternate modification. A Glycyl lysine isopeptide (Lys-Gly) (interchain with G-Cter in SUMO); alternate cross-link involves residue Lys230. A phosphothreonine; by CDK1 mark is found at Thr234 and Thr237. Residues Ser242 and Ser243 each carry the phosphoserine modification. The tract at residues 243–294 (SVEDIKAKMQASIEKGGSLPKVEAKFINYVKNCFRMTDQEAIQDLWQWRKSL) is required for nucleolar localization. A Glycyl lysine isopeptide (Lys-Gly) (interchain with G-Cter in SUMO1); alternate cross-link involves residue Lys248. Residues Lys248 and Lys250 each participate in a glycyl lysine isopeptide (Lys-Gly) (interchain with G-Cter in SUMO2); alternate cross-link. Lys250 bears the N6-acetyllysine; alternate mark. Ser254 carries the post-translational modification Phosphoserine. An N6-acetyllysine; alternate modification is found at Lys257. Lys257 is covalently cross-linked (Glycyl lysine isopeptide (Lys-Gly) (interchain with G-Cter in SUMO1); alternate). A Glycyl lysine isopeptide (Lys-Gly) (interchain with G-Cter in SUMO2); alternate cross-link involves residue Lys257. Residue Lys257 is modified to N6-acetyllysine. Ser260 carries the post-translational modification Phosphoserine. Glycyl lysine isopeptide (Lys-Gly) (interchain with G-Cter in SUMO2); alternate cross-links involve residues Lys263, Lys267, and Lys273. Lys263 participates in a covalent cross-link: Glycyl lysine isopeptide (Lys-Gly) (interchain with G-Cter in SUMO); alternate. 2 positions are modified to N6-acetyllysine; alternate: Lys267 and Lys273. Lys267 participates in a covalent cross-link: Glycyl lysine isopeptide (Lys-Gly) (interchain with G-Cter in SUMO1); alternate. Position 267 is an N6-succinyllysine; alternate (Lys267). Thr279 bears the Phosphothreonine mark. Lys292 bears the N6-acetyllysine mark.

Belongs to the nucleoplasmin family. In terms of assembly, decamer formed by two pentameric rings associated in a head-to-head fashion. Disulfide-linked dimers under certain conditions. The SWAP complex consists of NPM1, NCL, PARP1 and SWAP70. Interacts with NSUN2 and SENP3. Interacts with the methylated form of RPS10. Interacts (via N-terminal domain) with APEX1; the interaction is RNA-dependent and decreases in hydrogen peroxide-damaged cells. Interacts with isoform 1 of NEK2. Interacts with ROCK2 and BRCA2. Interacts with RPGR. Interacts with CENPW. Interacts with EIF2AK2/PKR. Interacts with CEBPA (isoform 4). Interacts with DDX31; this interaction prevents interaction between NPM1 and HDM2. Interacts with MYC; competitive with NOP53. Interacts with NOP53; the interaction is direct and competitive with MYC. Interacts with LRRC34. Interacts with RRP1B. Interacts with NPM3. Interacts with ALKBH2. Interacts with TTF1 (via C-terminal region). Interacts with NOP2. Interacts with ARID3C (via REKLES DOMAIN); the interaction mediates ARID3C nuclear shuttling. As to quaternary structure, (Microbial infection) Interacts with hepatitis delta virus S-HDAg. (Microbial infection) Interacts with HTLV1 Rex protein (via N-terminal nuclear localization signal). Acetylated at C-terminal lysine residues, thereby increasing affinity to histones. In terms of processing, ADP-ribosylated. Post-translationally, phosphorylated at Ser-4 by PLK1 and PLK2. Phosphorylation at Ser-4 by PLK2 in S phase is required for centriole duplication and is sufficient to trigger centriole replication. Phosphorylation at Ser-4 by PLK1 takes place during mitosis. Phosphorylated by CDK2 at Ser-125 and Thr-199. Phosphorylation at Thr-199 may trigger initiation of centrosome duplication. Phosphorylated by CDK1 at Thr-199, Thr-219, Thr-234 and Thr-237 during cell mitosis. When these four sites are phosphorated, RNA-binding activity seem to be abolished. May be phosphorylated at Ser-70 by NEK2. The Thr-199 phosphorylated form has higher affinity for ROCK2. CDK6 triggers Thr-199 phosphorylation when complexed to Kaposi's sarcoma herpesvirus (KSHV) V-cyclin, leading to viral reactivation by reducing viral LANA levels. Sumoylated by ARF. In terms of processing, ubiquitinated. Ubiquitination leads to proteasomal degradation. Deubiquitinated by USP36.

It is found in the nucleus. The protein resides in the nucleolus. Its subcellular location is the nucleoplasm. The protein localises to the cytoplasm. It localises to the cytoskeleton. It is found in the microtubule organizing center. The protein resides in the centrosome. Functionally, involved in diverse cellular processes such as ribosome biogenesis, centrosome duplication, protein chaperoning, histone assembly, cell proliferation, and regulation of tumor suppressors p53/TP53 and ARF. Binds ribosome presumably to drive ribosome nuclear export. Associated with nucleolar ribonucleoprotein structures and bind single-stranded nucleic acids. Acts as a chaperonin for the core histones H3, H2B and H4. Stimulates APEX1 endonuclease activity on apurinic/apyrimidinic (AP) double-stranded DNA but inhibits APEX1 endonuclease activity on AP single-stranded RNA. May exert a control of APEX1 endonuclease activity within nucleoli devoted to repair AP on rDNA and the removal of oxidized rRNA molecules. In concert with BRCA2, regulates centrosome duplication. Regulates centriole duplication: phosphorylation by PLK2 is able to trigger centriole replication. Negatively regulates the activation of EIF2AK2/PKR and suppresses apoptosis through inhibition of EIF2AK2/PKR autophosphorylation. Antagonizes the inhibitory effect of ATF5 on cell proliferation and relieves ATF5-induced G2/M blockade. In complex with MYC enhances the transcription of MYC target genes. May act as chaperonin or cotransporter in the nucleolar localization of transcription termination factor TTF1. The chain is Nucleophosmin from Homo sapiens (Human).